We begin with the raw amino-acid sequence, 238 residues long: Orotidine 5'-phosphate decarboxylase (238 aa).

Residues Asp10, Lys32, 59-68, Thr122, Arg184, Gln193, Gly213, and Arg214 each bind substrate; that span reads DLKLHDIPNT. Lys61 acts as the Proton donor in catalysis.

Belongs to the OMP decarboxylase family. Type 1 subfamily. As to quaternary structure, homodimer.

It carries out the reaction orotidine 5'-phosphate + H(+) = UMP + CO2. Its pathway is pyrimidine metabolism; UMP biosynthesis via de novo pathway; UMP from orotate: step 2/2. Catalyzes the decarboxylation of orotidine 5'-monophosphate (OMP) to uridine 5'-monophosphate (UMP). This is Orotidine 5'-phosphate decarboxylase from Bacillus cereus (strain AH820).